A 135-amino-acid polypeptide reads, in one-letter code: C-type lectin BPL (135 aa).

Disulfide bonds link Cys3–Cys14, Cys31–Cys131, Cys38–Cys133, and Cys106–Cys123. The 123-residue stretch at 10-132 folds into the C-type lectin domain; sequence MNGLCYKIFN…CESKNAFLCQ (123 aa). Ca(2+)-binding residues include Gln96, Asp98, Glu104, and Asp120. A Galactose-binding motif is present at residues 96–98; it reads QPD.

The protein belongs to the true venom lectin family. In terms of assembly, homodimer; disulfide-linked. As to expression, expressed by the venom gland.

The protein resides in the secreted. Galactose-binding protein which recognizes specific carbohydrate structures and agglutinates a variety of animal cells by binding to cell-surface glycoproteins and glycolipids. Calcium-dependent lectin. Shows high hemagglutinating activity in the presence of human erythrocytes, which are agglutinated with a minimum hemagglutination concentration (MHC) of 2.5-0.35 ug/ml. Causes indirect nephrotoxicity. Causes reductions in perfusion pressures, renal vascular resistance, urinary flow, glomerular filtration rate, sodium, potassium and chloride tubular transport. Its effects may be caused by the release of inflammatory mediators. The sequence is that of C-type lectin BPL from Bothrops pirajai (Piraja's lancehead).